Reading from the N-terminus, the 363-residue chain is MASSTSTRTPAGKRVVNQEELRRLMREKQRLSTNRKRIESPFAKYNRLGQLSCALCNTPVKSELLWQTHVLGKQHRERVAELKGAKGATQGPSTGTVPQATKRRATDVESQDAKKAKASAGPQVQPSTSASSANLDAARAAPSKPGLGLLPDYDDEEEEEEEGGGEERRDSSKHLPDAQGKEHSLASPRETTSNVLPNDPFNTNPPKAPLVPHSGSIEKAEIHEKVVERRENTAEALPEGFFDDPEVDAKVRKVDAPKDQMDKEWDEFQKAMRQVNTISEAIVAEEDEEGRLDRQIGEIDEQIECYRRVEKLRNRQDEIKNKLKEVLTIKELQKKEEENVDSDDEGELQDLLSQDWRVKGALL.

Position 2 is an N-acetylalanine (A2). Residues 16–40 (VNQEELRRLMREKQRLSTNRKRIES) adopt a coiled-coil conformation. Residues 53 to 75 (CALCNTPVKSELLWQTHVLGKQH) form a C2H2-type zinc finger. A disordered region spans residues 81–213 (ELKGAKGATQ…NPPKAPLVPH (133 aa)). Positions 90–99 (QGPSTGTVPQ) are enriched in polar residues. Positions 104-115 (RATDVESQDAKK) are enriched in basic and acidic residues. Residues 129 to 143 (SASSANLDAARAAPS) are compositionally biased toward low complexity. A compositionally biased stretch (acidic residues) spans 152 to 164 (DYDDEEEEEEEGG). The segment covering 165-184 (GEERRDSSKHLPDAQGKEHS) has biased composition (basic and acidic residues). Polar residues predominate over residues 189–205 (RETTSNVLPNDPFNTNP). S216 is modified (phosphoserine). A coiled-coil region spans residues 303 to 331 (IECYRRVEKLRNRQDEIKNKLKEVLTIKE). S342 and S353 each carry phosphoserine.

In terms of assembly, component of the XAB2 complex, a multimeric protein complex composed of XAB2, PRPF19, AQR, ZNF830, ISY1, and PPIE; this complex binds preferentially to RNA. Interacts with XAB2. Identified in a pentameric intron-binding (IB) complex composed of AQR, XAB2, ISY1, ZNF830 and PPIE that is incorporated into the spliceosome as a preassembled complex. The IB complex does not contain PRPF19. Post-translationally, phosphorylated in response to DNA damage by the cell cycle checkpoint kinases ATR/ATM. In terms of tissue distribution, widely expressed at low level. Expressed in oocytes from primordial to antral follicles. Also detected in somatic cells of the ovary, namely, in granulosa cells from the pre-antral follicle stage onward.

The protein localises to the nucleus. Its subcellular location is the chromosome. It localises to the nucleus speckle. Its function is as follows. May play a role in pre-mRNA splicing as component of the spliceosome. Acts as an important regulator of the cell cycle that participates in the maintenance of genome integrity. During cell cycle progression in embryonic fibroblast, prevents replication fork collapse, double-strand break formation and cell cycle checkpoint activation. Controls mitotic cell cycle progression and cell survival in rapidly proliferating intestinal epithelium and embryonic stem cells. During the embryo preimplantation, controls different aspects of M phase. During early oocyte growth, plays a role in oocyte survival by preventing chromosomal breaks formation, activation of TP63 and reduction of transcription. The polypeptide is Zinc finger protein 830 (Mus musculus (Mouse)).